Here is a 143-residue protein sequence, read N- to C-terminus: MFLGTHTPRLDDKGRLILPARFRDQLLDGLVITRGQERCLYIFPMQEFQRMHEEMRQAPLTNKEARDYQRVFLSGASSELPDKQGRVTVPPLLRTYAGLERDVAVIGAGARVELWDLRTWESYLDEVEPAFADRREEVLPGVL.

2 SpoVT-AbrB domains span residues 5-47 (THTP…PMQE) and 76-119 (ASSE…DLRT).

The protein belongs to the MraZ family. In terms of assembly, forms oligomers.

It localises to the cytoplasm. Its subcellular location is the nucleoid. The polypeptide is Transcriptional regulator MraZ (Kineococcus radiotolerans (strain ATCC BAA-149 / DSM 14245 / SRS30216)).